The sequence spans 340 residues: MAPLPHSVSPRHTQVADNGRLSEPTDYHPPTEISTDDGTVNILQLTDLHLYFDTPKATHEQDINKDSAHQTITGICQNNSAKRGNPHSADAINHSVTPVIHNYASFEACLTQALSEDVRCDLIVVTGDLVSEIHPQLYQHLYQRLHQSGIPFACIAGNHDVTDEIGKDLPFEQRSFEPHEPDSRLLSRYSMKLNGWEILFINSSVPGQIFGRIGNKNLYWLSQKLANSHHPVIIAMHHHLLPMHSAWIDAHITQDATEFWQTVAPFNALKAVVGGHVHQSSTRSYQGVQLYSTPSTGYQFKPGCDDFTLDDEAKPGYRWLSLKANGTLQSWVVRLEDNAG.

A disordered region spans residues 1–36 (MAPLPHSVSPRHTQVADNGRLSEPTDYHPPTEISTD). Fe cation contacts are provided by aspartate 47, histidine 49, aspartate 128, asparagine 158, histidine 237, histidine 276, and histidine 278. Residues histidine 49, aspartate 128, and 158–159 (NH) contribute to the AMP site. An AMP-binding site is contributed by histidine 278.

It belongs to the cyclic nucleotide phosphodiesterase class-III family. Requires Fe(2+) as cofactor.

In Psychrobacter sp. (strain PRwf-1), this protein is Probable cyclic nucleotide phosphodiesterase PsycPRwf_0181.